Consider the following 94-residue polypeptide: Conotoxin Im026 (94 aa).

The first 24 residues, 1–24, serve as a signal peptide directing secretion; the sequence is MRLTTMHSVILMLLLVFAFDNVDG. A propeptide spanning residues 25 to 59 is cleaved from the precursor; it reads DEPGQTARDVDNRNFMSILRSEGKPVHFLRAIKKR.

Contains 4 disulfide bonds. Expressed by the venom duct.

Its subcellular location is the secreted. Functionally, probable neurotoxin. The chain is Conotoxin Im026 from Conus imperialis (Imperial cone).